The following is a 991-amino-acid chain: Translation initiation factor IF-2 (991 aa).

Disordered stretches follow at residues 126 to 220 (QADH…DVGE) and 325 to 359 (VKAA…VDEK). Composition is skewed to polar residues over residues 138–160 (QTES…TEPA) and 201–210 (PAAQTESAVQ). Over residues 326 to 340 (KAAGDGDTAPAADDA) the composition is skewed to low complexity. Residues 343 to 353 (GKKKPGKKKKK) are compositionally biased toward basic residues. In terms of domain architecture, tr-type G spans 488-658 (IRPPVVTIMG…LTEAEIRELK (171 aa)). Positions 497–504 (GHVDHGKT) are G1. Residue 497–504 (GHVDHGKT) coordinates GTP. The tract at residues 522–526 (GITQH) is G2. Residues 544–547 (DTPG) are G3. Residues 544–548 (DTPGH) and 598–601 (NKID) contribute to the GTP site. A G4 region spans residues 598-601 (NKID). The G5 stretch occupies residues 634-636 (SAK).

It belongs to the TRAFAC class translation factor GTPase superfamily. Classic translation factor GTPase family. IF-2 subfamily.

It localises to the cytoplasm. One of the essential components for the initiation of protein synthesis. Protects formylmethionyl-tRNA from spontaneous hydrolysis and promotes its binding to the 30S ribosomal subunits. Also involved in the hydrolysis of GTP during the formation of the 70S ribosomal complex. The chain is Translation initiation factor IF-2 from Chlorobium phaeobacteroides (strain DSM 266 / SMG 266 / 2430).